The following is a 38-amino-acid chain: Potassium channel toxin alpha-KTx 2.15 (38 aa).

Cystine bridges form between cysteine 7–cysteine 29, cysteine 13–cysteine 34, and cysteine 17–cysteine 36.

The protein belongs to the short scorpion toxin superfamily. Potassium channel inhibitor family. Alpha-KTx 02 subfamily. Expressed by the venom gland.

It is found in the secreted. Blocks human voltage-gated potassium channels Kv1.2/KCNA2 (IC(50)=0.3 nM), Kv1.3/KCNA3 (IC(50)=8.3 nM) and Shaker IR (with inactivation domain removed) (IC(50)=12 nM) and blocks intermediate conductance calcium-activated potassium channel KCa3.1/KCNN4 (IC(50)=6.4 nM). This chain is Potassium channel toxin alpha-KTx 2.15, found in Centruroides tecomanus (Scorpion).